The sequence spans 158 residues: NADH-quinone oxidoreductase subunit B (158 aa).

Residues cysteine 37, cysteine 38, cysteine 102, and cysteine 132 each coordinate [4Fe-4S] cluster.

It belongs to the complex I 20 kDa subunit family. In terms of assembly, NDH-1 is composed of 14 different subunits. Subunits NuoB, C, D, E, F, and G constitute the peripheral sector of the complex. [4Fe-4S] cluster is required as a cofactor.

It localises to the cell inner membrane. It catalyses the reaction a quinone + NADH + 5 H(+)(in) = a quinol + NAD(+) + 4 H(+)(out). In terms of biological role, NDH-1 shuttles electrons from NADH, via FMN and iron-sulfur (Fe-S) centers, to quinones in the respiratory chain. Couples the redox reaction to proton translocation (for every two electrons transferred, four hydrogen ions are translocated across the cytoplasmic membrane), and thus conserves the redox energy in a proton gradient. The protein is NADH-quinone oxidoreductase subunit B of Legionella pneumophila (strain Corby).